The following is a 217-amino-acid chain: ATP-dependent Clp protease proteolytic subunit (217 aa).

The active-site Nucleophile is Ser121. His146 is a catalytic residue.

It belongs to the peptidase S14 family. As to quaternary structure, fourteen ClpP subunits assemble into 2 heptameric rings which stack back to back to give a disk-like structure with a central cavity, resembling the structure of eukaryotic proteasomes.

The protein resides in the cytoplasm. The enzyme catalyses Hydrolysis of proteins to small peptides in the presence of ATP and magnesium. alpha-casein is the usual test substrate. In the absence of ATP, only oligopeptides shorter than five residues are hydrolyzed (such as succinyl-Leu-Tyr-|-NHMec, and Leu-Tyr-Leu-|-Tyr-Trp, in which cleavage of the -Tyr-|-Leu- and -Tyr-|-Trp bonds also occurs).. Cleaves peptides in various proteins in a process that requires ATP hydrolysis. Has a chymotrypsin-like activity. Plays a major role in the degradation of misfolded proteins. The polypeptide is ATP-dependent Clp protease proteolytic subunit (Burkholderia lata (strain ATCC 17760 / DSM 23089 / LMG 22485 / NCIMB 9086 / R18194 / 383)).